Reading from the N-terminus, the 176-residue chain is PRELI domain-containing protein 2 (176 aa).

One can recognise a PRELI/MSF1 domain in the interval 1–175; sequence MGIAVEVRKV…ILRERCGCPF (175 aa).

The polypeptide is PRELI domain-containing protein 2 (prelid2) (Xenopus laevis (African clawed frog)).